A 445-amino-acid polypeptide reads, in one-letter code: MSKKLYIKTYGCQMNVYDSIKMQDLLYPFGYEPTENIEEADVIILNTCHIREKAAEKTYSELGRIKKLQDTRTKQGLSSAIIVVAGCVAQAEGEEIFTRTPYVDIVVGPQSYYNLPELISKVVRHEKHLIDLDFVEEAKFDQLPEQLYPQGTSAFISVQEGCDKFCTFCVVPYTRGAEFSRNVEQVYREALKVVSSGAKEIMLLGQNVNAYHGKGPADKIFSLADLLKHLAQIPNLERLRYTTSHPIDMNNDLIKLYGTEPKLMPFLHLPVQSGSNKILKAMNRKHDREYYFDIINRLREARPDIVLSSDFIVGFPGETDEDFEDTLDLVRRVKYGQCYSFKYSPRPGTPGATRTDQIPEHIKSERLTILQQELMAQQLAFNTSCVGSTMKVLFDRNGKFDDQIIGKTPYMQSVYIQNPNKSLLGKIIDVKITKASLNSLTGEIL.

The region spanning 3–124 (KKLYIKTYGC…LPELISKVVR (122 aa)) is the MTTase N-terminal domain. The [4Fe-4S] cluster site is built by cysteine 12, cysteine 48, cysteine 87, cysteine 162, cysteine 166, and cysteine 169. The Radical SAM core domain maps to 148 to 380 (YPQGTSAFIS…QQELMAQQLA (233 aa)). Residues 383-445 (TSCVGSTMKV…SLNSLTGEIL (63 aa)) form the TRAM domain.

It belongs to the methylthiotransferase family. MiaB subfamily. Monomer. [4Fe-4S] cluster is required as a cofactor.

The protein resides in the cytoplasm. The enzyme catalyses N(6)-dimethylallyladenosine(37) in tRNA + (sulfur carrier)-SH + AH2 + 2 S-adenosyl-L-methionine = 2-methylsulfanyl-N(6)-dimethylallyladenosine(37) in tRNA + (sulfur carrier)-H + 5'-deoxyadenosine + L-methionine + A + S-adenosyl-L-homocysteine + 2 H(+). Catalyzes the methylthiolation of N6-(dimethylallyl)adenosine (i(6)A), leading to the formation of 2-methylthio-N6-(dimethylallyl)adenosine (ms(2)i(6)A) at position 37 in tRNAs that read codons beginning with uridine. In Rickettsia rickettsii (strain Iowa), this protein is tRNA-2-methylthio-N(6)-dimethylallyladenosine synthase.